The chain runs to 485 residues: Glutamyl-tRNA(Gln) amidotransferase subunit A (485 aa).

Active-site charge relay system residues include lysine 79 and serine 154. Serine 178 functions as the Acyl-ester intermediate in the catalytic mechanism.

The protein belongs to the amidase family. GatA subfamily. Heterotrimer of A, B and C subunits.

It catalyses the reaction L-glutamyl-tRNA(Gln) + L-glutamine + ATP + H2O = L-glutaminyl-tRNA(Gln) + L-glutamate + ADP + phosphate + H(+). Allows the formation of correctly charged Gln-tRNA(Gln) through the transamidation of misacylated Glu-tRNA(Gln) in organisms which lack glutaminyl-tRNA synthetase. The reaction takes place in the presence of glutamine and ATP through an activated gamma-phospho-Glu-tRNA(Gln). This chain is Glutamyl-tRNA(Gln) amidotransferase subunit A, found in Staphylococcus aureus (strain MW2).